Reading from the N-terminus, the 328-residue chain is Beta-ketoacyl-[acyl-carrier-protein] synthase III (328 aa).

Residues Cys114 and His253 contribute to the active site. The tract at residues 254-258 (QANIR) is ACP-binding. Residue Asn283 is part of the active site.

This sequence belongs to the thiolase-like superfamily. FabH family. In terms of assembly, homodimer.

The protein resides in the cytoplasm. It catalyses the reaction malonyl-[ACP] + acetyl-CoA + H(+) = 3-oxobutanoyl-[ACP] + CO2 + CoA. Its pathway is lipid metabolism; fatty acid biosynthesis. Its function is as follows. Catalyzes the condensation reaction of fatty acid synthesis by the addition to an acyl acceptor of two carbons from malonyl-ACP. Catalyzes the first condensation reaction which initiates fatty acid synthesis and may therefore play a role in governing the total rate of fatty acid production. Possesses both acetoacetyl-ACP synthase and acetyl transacylase activities. Its substrate specificity determines the biosynthesis of branched-chain and/or straight-chain of fatty acids. This is Beta-ketoacyl-[acyl-carrier-protein] synthase III from Clostridioides difficile (strain 630) (Peptoclostridium difficile).